We begin with the raw amino-acid sequence, 174 residues long: Crossover junction endodeoxyribonuclease RuvC (174 aa).

Residues D8, E67, and D139 contribute to the active site. Residues D8, E67, and D139 each coordinate Mg(2+).

Belongs to the RuvC family. Homodimer which binds Holliday junction (HJ) DNA. The HJ becomes 2-fold symmetrical on binding to RuvC with unstacked arms; it has a different conformation from HJ DNA in complex with RuvA. In the full resolvosome a probable DNA-RuvA(4)-RuvB(12)-RuvC(2) complex forms which resolves the HJ. The cofactor is Mg(2+).

It is found in the cytoplasm. It catalyses the reaction Endonucleolytic cleavage at a junction such as a reciprocal single-stranded crossover between two homologous DNA duplexes (Holliday junction).. Functionally, the RuvA-RuvB-RuvC complex processes Holliday junction (HJ) DNA during genetic recombination and DNA repair. Endonuclease that resolves HJ intermediates. Cleaves cruciform DNA by making single-stranded nicks across the HJ at symmetrical positions within the homologous arms, yielding a 5'-phosphate and a 3'-hydroxyl group; requires a central core of homology in the junction. The consensus cleavage sequence is 5'-(A/T)TT(C/G)-3'. Cleavage occurs on the 3'-side of the TT dinucleotide at the point of strand exchange. HJ branch migration catalyzed by RuvA-RuvB allows RuvC to scan DNA until it finds its consensus sequence, where it cleaves and resolves the cruciform DNA. The sequence is that of Crossover junction endodeoxyribonuclease RuvC from Pseudoalteromonas translucida (strain TAC 125).